A 447-amino-acid polypeptide reads, in one-letter code: NADP-specific glutamate dehydrogenase (447 aa).

Substrate-binding residues include lysine 92, glutamine 113, and lysine 116. Catalysis depends on lysine 128, which acts as the Proton donor. Substrate is bound at residue glycine 167. Residues threonine 211 and asparagine 242 each contribute to the NADP(+) site. A substrate-binding site is contributed by serine 380.

This sequence belongs to the Glu/Leu/Phe/Val dehydrogenases family. Homohexamer.

The enzyme catalyses L-glutamate + NADP(+) + H2O = 2-oxoglutarate + NH4(+) + NADPH + H(+). Its activity is regulated as follows. Competitively inhibited by homoserine and by glutamine. Its function is as follows. Catalyzes the reversible oxidative deamination of glutamate to alpha-ketoglutarate and ammonia. The chain is NADP-specific glutamate dehydrogenase from Escherichia coli (strain K12).